Consider the following 147-residue polypeptide: Large ribosomal subunit protein uL16 (147 aa).

This sequence belongs to the universal ribosomal protein uL16 family. As to quaternary structure, part of the 50S ribosomal subunit.

Its function is as follows. Binds 23S rRNA and is also seen to make contacts with the A and possibly P site tRNAs. This Clostridium botulinum (strain ATCC 19397 / Type A) protein is Large ribosomal subunit protein uL16.